Here is a 200-residue protein sequence, read N- to C-terminus: 3-isopropylmalate dehydratase small subunit (200 aa).

This sequence belongs to the LeuD family. LeuD type 1 subfamily. In terms of assembly, heterodimer of LeuC and LeuD.

It catalyses the reaction (2R,3S)-3-isopropylmalate = (2S)-2-isopropylmalate. Its pathway is amino-acid biosynthesis; L-leucine biosynthesis; L-leucine from 3-methyl-2-oxobutanoate: step 2/4. Functionally, catalyzes the isomerization between 2-isopropylmalate and 3-isopropylmalate, via the formation of 2-isopropylmaleate. The chain is 3-isopropylmalate dehydratase small subunit from Saccharopolyspora erythraea (strain ATCC 11635 / DSM 40517 / JCM 4748 / NBRC 13426 / NCIMB 8594 / NRRL 2338).